A 227-amino-acid polypeptide reads, in one-letter code: Phosphoribosylformylglycinamidine synthase subunit PurQ (227 aa).

The Glutamine amidotransferase type-1 domain occupies lysine 2–asparagine 226. The active-site Nucleophile is the cysteine 86. Catalysis depends on residues histidine 195 and glutamate 197.

In terms of assembly, part of the FGAM synthase complex composed of 1 PurL, 1 PurQ and 2 PurS subunits.

It is found in the cytoplasm. The enzyme catalyses N(2)-formyl-N(1)-(5-phospho-beta-D-ribosyl)glycinamide + L-glutamine + ATP + H2O = 2-formamido-N(1)-(5-O-phospho-beta-D-ribosyl)acetamidine + L-glutamate + ADP + phosphate + H(+). The catalysed reaction is L-glutamine + H2O = L-glutamate + NH4(+). It functions in the pathway purine metabolism; IMP biosynthesis via de novo pathway; 5-amino-1-(5-phospho-D-ribosyl)imidazole from N(2)-formyl-N(1)-(5-phospho-D-ribosyl)glycinamide: step 1/2. Part of the phosphoribosylformylglycinamidine synthase complex involved in the purines biosynthetic pathway. Catalyzes the ATP-dependent conversion of formylglycinamide ribonucleotide (FGAR) and glutamine to yield formylglycinamidine ribonucleotide (FGAM) and glutamate. The FGAM synthase complex is composed of three subunits. PurQ produces an ammonia molecule by converting glutamine to glutamate. PurL transfers the ammonia molecule to FGAR to form FGAM in an ATP-dependent manner. PurS interacts with PurQ and PurL and is thought to assist in the transfer of the ammonia molecule from PurQ to PurL. The protein is Phosphoribosylformylglycinamidine synthase subunit PurQ of Listeria monocytogenes serotype 4b (strain CLIP80459).